The primary structure comprises 35 residues: Cytochrome c-550 (35 aa).

Heme c is bound by residues C17, C20, and H21.

Binds 1 heme c group covalently per subunit.

In terms of biological role, monoheme cytochrome which functions as an electron carrier in the reduction of nitrite by membrane vesicles. The sequence is that of Cytochrome c-550 from Virgibacillus halodenitrificans (Bacillus halodenitrificans).